We begin with the raw amino-acid sequence, 608 residues long: Isocitrate dehydrogenase kinase/phosphatase (608 aa).

Residues 327–333 and lysine 348 each bind ATP; that span reads APGIKGL. Aspartate 383 is an active-site residue. The interval 589 to 608 is disordered; the sequence is FDSTPDAGDGDSAGDAQRAA.

Belongs to the AceK family.

The protein localises to the cytoplasm. It catalyses the reaction L-seryl-[isocitrate dehydrogenase] + ATP = O-phospho-L-seryl-[isocitrate dehydrogenase] + ADP + H(+). Its function is as follows. Bifunctional enzyme which can phosphorylate or dephosphorylate isocitrate dehydrogenase (IDH) on a specific serine residue. This is a regulatory mechanism which enables bacteria to bypass the Krebs cycle via the glyoxylate shunt in response to the source of carbon. When bacteria are grown on glucose, IDH is fully active and unphosphorylated, but when grown on acetate or ethanol, the activity of IDH declines drastically concomitant with its phosphorylation. The polypeptide is Isocitrate dehydrogenase kinase/phosphatase (Burkholderia ambifaria (strain MC40-6)).